Here is a 64-residue protein sequence, read N- to C-terminus: Large ribosomal subunit protein bL35 (64 aa).

It belongs to the bacterial ribosomal protein bL35 family.

This is Large ribosomal subunit protein bL35 from Pseudomonas putida (strain W619).